A 197-amino-acid polypeptide reads, in one-letter code: Adenylate kinase (197 aa).

Residue 19-24 (GSGKGT) coordinates ATP. The tract at residues 39–68 (SSGDLLRAEVQSGSPKGKELKAMMERGELV) is NMP. AMP is bound by residues serine 40, arginine 45, 66–68 (ELV), 95–98 (RYPR), and glutamine 102. Residues 132 to 142 (KRAETSNRVDD) form an LID region. An ATP-binding site is contributed by arginine 133. Residues arginine 139 and arginine 150 each coordinate AMP. Residue glycine 178 coordinates ATP.

The protein belongs to the adenylate kinase family. As to quaternary structure, monomer.

The protein resides in the cytoplasm. The enzyme catalyses AMP + ATP = 2 ADP. In terms of biological role, catalyzes the reversible transfer of the terminal phosphate group between ATP and AMP. Plays an important role in cellular energy homeostasis and in adenine nucleotide metabolism. The polypeptide is Adenylate kinase (Schistosoma mansoni (Blood fluke)).